The sequence spans 398 residues: Dual specificity protein phosphatase 4 (398 aa).

V2 carries the N-acetylvaline modification. Positions 45 to 163 (SGGKCLLLDC…FSSEYPEFCS (119 aa)) constitute a Rhodanese domain. The Tyrosine-protein phosphatase domain maps to 199–340 (GPVEILPFLY…LLQFESQVLT (142 aa)). The Phosphocysteine intermediate role is filled by C284. Phosphoserine; by MAPK is present on residues S390 and S395.

The protein belongs to the protein-tyrosine phosphatase family. Non-receptor class dual specificity subfamily. As to quaternary structure, hollow spherical complex composed of 24 subunits with pseudooctahedral symmetry, has a tetramer as the basic unit. Phosphorylation in the C-terminus by ERK1/2 inhibits proteasomal degradation and stabilizes the protein.

It is found in the nucleus. The enzyme catalyses O-phospho-L-tyrosyl-[protein] + H2O = L-tyrosyl-[protein] + phosphate. The catalysed reaction is O-phospho-L-seryl-[protein] + H2O = L-seryl-[protein] + phosphate. It carries out the reaction O-phospho-L-threonyl-[protein] + H2O = L-threonyl-[protein] + phosphate. Regulates mitogenic signal transduction by dephosphorylating both Thr and Tyr residues on MAP kinases ERK1 and ERK2. The protein is Dual specificity protein phosphatase 4 (Dusp4) of Mus musculus (Mouse).